Reading from the N-terminus, the 192-residue chain is Probable chorismate pyruvate-lyase (192 aa).

The substrate site is built by Arg85, Leu120, and Glu176.

The protein belongs to the UbiC family.

It is found in the cytoplasm. The catalysed reaction is chorismate = 4-hydroxybenzoate + pyruvate. It functions in the pathway cofactor biosynthesis; ubiquinone biosynthesis. Functionally, removes the pyruvyl group from chorismate, with concomitant aromatization of the ring, to provide 4-hydroxybenzoate (4HB) for the ubiquinone pathway. This Pseudoalteromonas atlantica (strain T6c / ATCC BAA-1087) protein is Probable chorismate pyruvate-lyase.